A 377-amino-acid polypeptide reads, in one-letter code: Succinyl-diaminopimelate desuccinylase (377 aa).

His67 contacts Zn(2+). Residue Asp69 is part of the active site. Asp100 is a binding site for Zn(2+). Glu134 (proton acceptor) is an active-site residue. Zn(2+)-binding residues include Glu135, Glu163, and His349.

Belongs to the peptidase M20A family. DapE subfamily. As to quaternary structure, homodimer. The cofactor is Zn(2+). Co(2+) serves as cofactor.

The catalysed reaction is N-succinyl-(2S,6S)-2,6-diaminopimelate + H2O = (2S,6S)-2,6-diaminopimelate + succinate. It functions in the pathway amino-acid biosynthesis; L-lysine biosynthesis via DAP pathway; LL-2,6-diaminopimelate from (S)-tetrahydrodipicolinate (succinylase route): step 3/3. Its function is as follows. Catalyzes the hydrolysis of N-succinyl-L,L-diaminopimelic acid (SDAP), forming succinate and LL-2,6-diaminopimelate (DAP), an intermediate involved in the bacterial biosynthesis of lysine and meso-diaminopimelic acid, an essential component of bacterial cell walls. The sequence is that of Succinyl-diaminopimelate desuccinylase from Dechloromonas aromatica (strain RCB).